A 624-amino-acid chain; its full sequence is Ceramide transfer protein (624 aa).

Polar residues predominate over residues 1-11 (MSDNQSWNSSG). The tract at residues 1–24 (MSDNQSWNSSGSEEDPETESGPPV) is disordered. Residues 23–117 (PVERCGVLSK…WIDAIEQHKT (95 aa)) form the PH domain. At Ser-126 the chain carries Phosphoserine. Position 132 is a phosphoserine; by PKD (Ser-132). The residue at position 135 (Ser-135) is a Phosphoserine. The stretch at 263–303 (IELMVKREDSWQKRLDKETEKKRRTEEAYKNAMTELKKKSH) forms a coiled coil. At Ser-315 the chain carries Phosphoserine. Residues 321–327 (EFFDAVE) carry the FFAT motif. A Phosphotyrosine modification is found at Tyr-372. Residues Ser-373, Ser-377, and Ser-380 each carry the phosphoserine modification. The START domain maps to 389–618 (DVHRFSSQVE…FTSYVQEKTA (230 aa)). Positions 472, 493, 530, and 579 each coordinate an N-acylsphing-4-enine.

Interacts with VAPA and VAPB. Interaction with VAPB is less efficient than with VAPA. Interacts (via FFAT motif) with MOSPD2 (via MSP domain). Post-translationally, phosphorylation on Ser-132 decreases the affinity toward phosphatidylinositol 4-phosphate at Golgi membranes and reduces ceramide transfer activity. Inactivated by hyperphosphorylation of serine residues by CSNK1G2/CK1 that triggers dissociation from the Golgi complex, thus down-regulating ER-to-Golgi transport of ceramide and sphingomyelin synthesis. In terms of tissue distribution, widely expressed.

It localises to the cytoplasm. Its subcellular location is the golgi apparatus. It is found in the endoplasmic reticulum. The enzyme catalyses N-hexadecanoylsphing-4-enine(in) = N-hexadecanoylsphing-4-enine(out). Shelters ceramides and diacylglycerol lipids inside its START domain and mediates the intracellular trafficking of ceramides and diacylglycerol lipids in a non-vesicular manner. This chain is Ceramide transfer protein, found in Homo sapiens (Human).